Here is a 426-residue protein sequence, read N- to C-terminus: MLDNQLLRENPQYVATQLLKRGFQFDAVTFSQLEEKRKALQVSTQSLQNERNLRSKAIGEAKSRGENIEPMREEVNKLGAKLEQQKTELDEILKQIEVISLSLPNIPHESVPVGKDELDNQEIRKWGDVPAFSFPVKSHDELGEALGQMDFALAAKITGSRFVVMKGHLARLHRALIQFMLDIHIQQHGYQEIYVPYIVNADSLLGTGQLPKFEADLFKLTGDNGYYLTSTSEIPVTNTVREMILSAEQLPIRYVCHSPCFRSEAGSYGKDTKGMIRQHQFEKVELVWITKPEDSYNALEQLTQHAEVILQRLKLPYRVVALCTGDIGAGSAKTYDLEVWLPSQNTYREISSCSNMEAFQARRMKARFRNPDTNEIQLVHTLNGSGLAVGRTLVAIMENYQDEHGNIHIPDALKPYLGGIDIISVK.

231–233 contacts L-serine; sequence TSE. 262-264 is an ATP binding site; that stretch reads RSE. Glutamate 285 lines the L-serine pocket. Position 349-352 (349-352) interacts with ATP; that stretch reads EISS. Position 385 (serine 385) interacts with L-serine.

It belongs to the class-II aminoacyl-tRNA synthetase family. Type-1 seryl-tRNA synthetase subfamily. As to quaternary structure, homodimer. The tRNA molecule binds across the dimer.

The protein resides in the cytoplasm. The enzyme catalyses tRNA(Ser) + L-serine + ATP = L-seryl-tRNA(Ser) + AMP + diphosphate + H(+). It carries out the reaction tRNA(Sec) + L-serine + ATP = L-seryl-tRNA(Sec) + AMP + diphosphate + H(+). It functions in the pathway aminoacyl-tRNA biosynthesis; selenocysteinyl-tRNA(Sec) biosynthesis; L-seryl-tRNA(Sec) from L-serine and tRNA(Sec): step 1/1. Catalyzes the attachment of serine to tRNA(Ser). Is also able to aminoacylate tRNA(Sec) with serine, to form the misacylated tRNA L-seryl-tRNA(Sec), which will be further converted into selenocysteinyl-tRNA(Sec). The polypeptide is Serine--tRNA ligase (Legionella pneumophila (strain Lens)).